Consider the following 244-residue polypeptide: Krueppel-like factor 9 (244 aa).

The interval 80–142 (SVCSDSLESP…AKGKHASEKR (63 aa)) is disordered. A Phosphoserine modification is found at serine 122. 3 C2H2-type zinc fingers span residues 143 to 167 (HKCPYSGCGKVYGKSSHLKAHYRVH), 173 to 197 (FPCTWPDCLKKFSRSDELTRHYRTH), and 203 to 225 (FRCPLCEKRFMRSDHLTKHARRH).

The protein belongs to the Sp1 C2H2-type zinc-finger protein family. Interacts with ZZEF1. As to expression, epidermis (at protein level).

The protein localises to the nucleus. In terms of biological role, transcription factor that binds to GC box promoter elements. Selectively activates mRNA synthesis from genes containing tandem repeats of GC boxes but represses genes with a single GC box. Acts as an epidermal circadian transcription factor regulating keratinocyte proliferation. This Homo sapiens (Human) protein is Krueppel-like factor 9 (KLF9).